The following is a 1159-amino-acid chain: WASH complex subunit 5 (1159 aa).

Ser-917 carries the post-translational modification Phosphoserine.

Belongs to the strumpellin family. As to quaternary structure, component of the WASH core complex also described as WASH regulatory complex (SHRC) composed of WASH (WASHC1, WASH2P or WASH3P), WASHC2 (WASHC2A or WASHC2C), WASHC3, WASHC4 and WASHC5. The WASH core complex associates via WASHC2 with the F-actin-capping protein dimer (formed by CAPZA1, CAPZA2 or CAPZA3 and CAPZB) in a transient or substoichiometric manner which was initially described as WASH complex. Interacts with VCP, PI4K2A.

It localises to the cytoplasm. Its subcellular location is the cytosol. It is found in the endoplasmic reticulum. The protein localises to the early endosome. In terms of biological role, acts as a component of the WASH core complex that functions as a nucleation-promoting factor (NPF) at the surface of endosomes, where it recruits and activates the Arp2/3 complex to induce actin polymerization, playing a key role in the fission of tubules that serve as transport intermediates during endosome sorting. May be involved in axonal outgrowth. Involved in cellular localization of ADRB2. Involved in cellular trafficking of BLOC-1 complex cargos such as ATP7A and VAMP7. This Pongo abelii (Sumatran orangutan) protein is WASH complex subunit 5.